The following is a 244-amino-acid chain: Diablo homolog, mitochondrial (244 aa).

Residues 1–38 constitute a mitochondrion transit peptide; that stretch reads MASLPRRLIWSFSYILRESFPIVSRRNCVSLLRASWRK. The IAP-binding signature appears at 50 to 54; it reads AIPVG. Residues 207-218 show a composition bias toward basic and acidic residues; the sequence is DEIKRTITEDKG. Residues 207–244 form a disordered region; it reads DEIKRTITEDKGNPPSGGSPRSSLSEEEEIPEAYLRED. Residues 220–229 show a composition bias toward low complexity; it reads PPSGGSPRSS.

Belongs to the Smac/DIABLO protein family. In terms of assembly, homodimer.

The protein resides in the mitochondrion. Promotes apoptosis. Acts by opposing the inhibitory activity of inhibitor of apoptosis proteins (IAP). The protein is Diablo homolog, mitochondrial of Xenopus tropicalis (Western clawed frog).